The chain runs to 1374 residues: Y' element ATP-dependent helicase YML133C (1374 aa).

Residues 375–552 (EIYMADTPSV…LQRIGLTGLA (178 aa)) enclose the Helicase ATP-binding domain. ATP is bound at residue 388–395 (APPGYGKT). Residues 609–758 (KLLLALFEIE…EFYGLESKKG (150 aa)) form the Helicase C-terminal domain. Residues 832-975 (ANASTNATTN…ATTTESTNAS (144 aa)) are compositionally biased toward low complexity. Positions 832 to 999 (ANASTNATTN…RFHPVTDINK (168 aa)) are disordered. Over residues 976–999 (AKEDANKDGNAEDNRFHPVTDINK) the composition is skewed to basic and acidic residues.

This sequence belongs to the helicase family. Yeast subtelomeric Y' repeat subfamily.

Catalyzes DNA unwinding and is involved in telomerase-independent telomere maintenance. This chain is Y' element ATP-dependent helicase YML133C, found in Saccharomyces cerevisiae (strain ATCC 204508 / S288c) (Baker's yeast).